The following is a 225-amino-acid chain: Red fluorescent protein drFP583 (225 aa).

A cross-link (2-iminomethyl-5-imidazolinone (Gln-Gly)) is located at residues 66-68 (QYG). (Z)-2,3-didehydrotyrosine is present on tyrosine 67.

It belongs to the GFP family. Homotetramer. Contains a chromophore consisting of modified amino acid residues. The chromophore is formed by autocatalytic backbone condensation between Xaa-N and Gly-(N+2), oxidation of Tyr-(N+1) to didehydrotyrosine, and formation of a double bond to the alpha-amino nitrogen of residue Xaa-N. Maturation of the chromophore requires nothing other than molecular oxygen.

Functionally, thought to play a role in photoprotection of the coral's resident symbiont microalgae's photosystems from photoinhibition caused by high light levels found near the surface of coral reefs. In deeper water, the fluorescence may be to convert blue light into longer wavelengths more suitable for use in photosynthesis by the microalgal symbionts. This Discosoma sp. (Sea anemone) protein is Red fluorescent protein drFP583.